We begin with the raw amino-acid sequence, 401 residues long: Putative phosphatidylinositol 4-phosphate 5-kinase 11 (401 aa).

One can recognise a PIPK domain in the interval 1–390 (MELRATVENR…RFQDFVSNIF (390 aa)). A compositionally biased stretch (polar residues) spans 242 to 260 (SFKSNSTKSMKTASSSPDR). The segment at 242-268 (SFKSNSTKSMKTASSSPDRSSVAMYSC) is disordered. The activation loop stretch occupies residues 350–371 (YGMKKRIEHCYKSIQYNSNSIS).

It carries out the reaction a 1,2-diacyl-sn-glycero-3-phospho-(1D-myo-inositol 4-phosphate) + ATP = a 1,2-diacyl-sn-glycero-3-phospho-(1D-myo-inositol-4,5-bisphosphate) + ADP + H(+). This is Putative phosphatidylinositol 4-phosphate 5-kinase 11 (PIP5K11) from Arabidopsis thaliana (Mouse-ear cress).